We begin with the raw amino-acid sequence, 119 residues long: Large ribosomal subunit protein uL18 (119 aa).

Positions 1 to 26 (MGQNDKAARRQKIKLRSKTRGQGTAA) are disordered. Over residues 9 to 19 (RRQKIKLRSKT) the composition is skewed to basic residues.

Belongs to the universal ribosomal protein uL18 family. Part of the 50S ribosomal subunit; part of the 5S rRNA/L5/L18/L25 subcomplex. Contacts the 5S and 23S rRNAs.

In terms of biological role, this is one of the proteins that bind and probably mediate the attachment of the 5S RNA into the large ribosomal subunit, where it forms part of the central protuberance. In Prosthecochloris aestuarii (strain DSM 271 / SK 413), this protein is Large ribosomal subunit protein uL18.